The primary structure comprises 505 residues: Maturase K (505 aa).

Belongs to the intron maturase 2 family. MatK subfamily.

The protein localises to the plastid. It localises to the chloroplast. Functionally, usually encoded in the trnK tRNA gene intron. Probably assists in splicing its own and other chloroplast group II introns. This is Maturase K from Idiospermum australiense (Ribbonwood tree).